The chain runs to 806 residues: Leucine--tRNA ligase (806 aa).

The 'HIGH' region signature appears at 38–48 (PYPSGEIHMGH). A 'KMSKS' region motif is present at residues 572–576 (KMSKS). Lys575 contributes to the ATP binding site.

Belongs to the class-I aminoacyl-tRNA synthetase family.

The protein resides in the cytoplasm. It carries out the reaction tRNA(Leu) + L-leucine + ATP = L-leucyl-tRNA(Leu) + AMP + diphosphate. The protein is Leucine--tRNA ligase of Helicobacter pylori (strain ATCC 700392 / 26695) (Campylobacter pylori).